The following is a 338-amino-acid chain: Tetraacyldisaccharide 4'-kinase (338 aa).

61–68 provides a ligand contact to ATP; that stretch reads TLGGTGKT.

This sequence belongs to the LpxK family.

The catalysed reaction is a lipid A disaccharide + ATP = a lipid IVA + ADP + H(+). Its pathway is glycolipid biosynthesis; lipid IV(A) biosynthesis; lipid IV(A) from (3R)-3-hydroxytetradecanoyl-[acyl-carrier-protein] and UDP-N-acetyl-alpha-D-glucosamine: step 6/6. Functionally, transfers the gamma-phosphate of ATP to the 4'-position of a tetraacyldisaccharide 1-phosphate intermediate (termed DS-1-P) to form tetraacyldisaccharide 1,4'-bis-phosphate (lipid IVA). The chain is Tetraacyldisaccharide 4'-kinase from Nitrosococcus oceani (strain ATCC 19707 / BCRC 17464 / JCM 30415 / NCIMB 11848 / C-107).